The chain runs to 358 residues: Phospho-N-acetylmuramoyl-pentapeptide-transferase (358 aa).

Helical transmembrane passes span 13–35 (LLIL…IFIG), 81–101 (MGGV…NINL), 106–126 (LFLL…DDFL), 142–162 (FFLQ…KDLI), 171–191 (SWQI…LVGI), 201–221 (LDGL…TEIL), 228–248 (LIIF…FLKY), 268–290 (ILGS…GIFI), and 336–356 (IVEN…VLKI).

Belongs to the glycosyltransferase 4 family. MraY subfamily. The cofactor is Mg(2+).

The protein resides in the cell inner membrane. The catalysed reaction is UDP-N-acetyl-alpha-D-muramoyl-L-alanyl-gamma-D-glutamyl-meso-2,6-diaminopimeloyl-D-alanyl-D-alanine + di-trans,octa-cis-undecaprenyl phosphate = di-trans,octa-cis-undecaprenyl diphospho-N-acetyl-alpha-D-muramoyl-L-alanyl-D-glutamyl-meso-2,6-diaminopimeloyl-D-alanyl-D-alanine + UMP. The protein operates within cell wall biogenesis; peptidoglycan biosynthesis. Its function is as follows. Catalyzes the initial step of the lipid cycle reactions in the biosynthesis of the cell wall peptidoglycan: transfers peptidoglycan precursor phospho-MurNAc-pentapeptide from UDP-MurNAc-pentapeptide onto the lipid carrier undecaprenyl phosphate, yielding undecaprenyl-pyrophosphoryl-MurNAc-pentapeptide, known as lipid I. The sequence is that of Phospho-N-acetylmuramoyl-pentapeptide-transferase from Prochlorococcus marinus (strain MIT 9312).